The primary structure comprises 305 residues: Glycine--tRNA ligase alpha subunit (305 aa).

Belongs to the class-II aminoacyl-tRNA synthetase family. In terms of assembly, tetramer of two alpha and two beta subunits.

It is found in the cytoplasm. It catalyses the reaction tRNA(Gly) + glycine + ATP = glycyl-tRNA(Gly) + AMP + diphosphate. This Streptococcus pyogenes serotype M18 (strain MGAS8232) protein is Glycine--tRNA ligase alpha subunit.